We begin with the raw amino-acid sequence, 546 residues long: Adenine DNA glycosylase (546 aa).

A disordered region spans residues 19–51 (RAAVGSGHRKQAASQEGRQKHAKNNSQAKPSAC). The Proton donor/acceptor role is filled by glutamate 131. The [4Fe-4S] cluster site is built by cysteine 287, cysteine 294, cysteine 297, and cysteine 303. The Nudix hydrolase domain maps to 364-495 (PREESSATCV…AMKKVFRVYQ (132 aa)). Positions 404–426 (VTWEPSEQLQRKALLQELQRWAG) match the Nudix box motif.

The protein belongs to the Nth/MutY family. The cofactor is [4Fe-4S] cluster.

It is found in the nucleus. The protein resides in the mitochondrion. The enzyme catalyses Hydrolyzes free adenine bases from 7,8-dihydro-8-oxoguanine:adenine mismatched double-stranded DNA, leaving an apurinic site.. Involved in oxidative DNA damage repair. Initiates repair of A*oxoG to C*G by removing the inappropriately paired adenine base from the DNA backbone. Possesses both adenine and 2-OH-A DNA glycosylase activities. In Homo sapiens (Human), this protein is Adenine DNA glycosylase (MUTYH).